Here is a 674-residue protein sequence, read N- to C-terminus: Phosphopantothenoylcysteine decarboxylase subunit VHS3 (674 aa).

5 disordered regions span residues 1 to 164, 190 to 230, 348 to 368, 384 to 426, and 575 to 674; these read MTNK…SILS, LNSD…RPSV, QHNS…NITG, TSSN…SNVV, and VSAG…LQRS. Over residues 15 to 81 the composition is skewed to polar residues; sequence ASNTLSGAEQ…TSGAVVSNTP (67 aa). Position 90 is a phosphothreonine (Thr90). Residues 106–116 are compositionally biased toward polar residues; sequence EQTPPNQVARQ. The span at 137-150 shows a compositional bias: basic and acidic residues; it reads NLKDINTKVPKDGE. Residues 152-164 show a composition bias toward polar residues; sequence SASSFSTPTSILS. Residues 198–212 show a composition bias toward basic and acidic residues; sequence SPRKEHPHFYVEDPL. Low complexity predominate over residues 214 to 230; the sequence is TPSVRSRSNSTSPRPSV. Polar residues predominate over residues 351-368; that stretch reads SIDTSFNSTNSNAGNITG. Low complexity predominate over residues 384-395; that stretch reads TSSNSAASQTNN. Over residues 403–426 the composition is skewed to polar residues; it reads MASTTGFPSTLGGSRTYSNSSNVV. The segment covering 580-591 has biased composition (acidic residues); that stretch reads EEEEDEDNDEED. Basic and acidic residues predominate over residues 592–602; it reads DNKKNDTGGKD. The segment covering 603-660 has biased composition (acidic residues); sequence EDNDDDDDDDDDDDDDDDDDDDDDDDDDDDDDDDDDDDDDDDDDDDDDEDDEDEDEDD. The span at 661–674 shows a compositional bias: basic and acidic residues; it reads EGKKKEDKGGLQRS.

Belongs to the HFCD (homooligomeric flavin containing Cys decarboxylase) superfamily. Interacts with the C-terminal domain of PPZ1. Component of the phosphopantothenoylcysteine decarboxylase (PPCDC) complex, a heterotrimer composed of CAB3, SIS2 and VHS3.

Functionally, component of the phosphopantothenoylcysteine decarboxylase (PPCDC) involved in the coenzyme A synthesis. Acts as an inhibitory subunit of protein phosphatase PPZ1, which is involved in many cellular processes such as G1-S transition or salt tolerance. This is Phosphopantothenoylcysteine decarboxylase subunit VHS3 (VHS3) from Saccharomyces cerevisiae (strain ATCC 204508 / S288c) (Baker's yeast).